We begin with the raw amino-acid sequence, 740 residues long: Phosphoribosylformylglycinamidine synthase subunit PurL (740 aa).

Residue H53 is part of the active site. Residues Y56 and K95 each coordinate ATP. E97 is a binding site for Mg(2+). Residues 98–101 and R120 contribute to the substrate site; that span reads SHNH. Catalysis depends on H99, which acts as the Proton acceptor. Residue D121 participates in Mg(2+) binding. Q244 is a binding site for substrate. A Mg(2+)-binding site is contributed by D274. Residue 318–320 participates in substrate binding; that stretch reads ESQ. The ATP site is built by D501 and G538. Mg(2+) is bound at residue N539. S541 is a binding site for substrate.

Belongs to the FGAMS family. In terms of assembly, monomer. Part of the FGAM synthase complex composed of 1 PurL, 1 PurQ and 2 PurS subunits.

The protein localises to the cytoplasm. The catalysed reaction is N(2)-formyl-N(1)-(5-phospho-beta-D-ribosyl)glycinamide + L-glutamine + ATP + H2O = 2-formamido-N(1)-(5-O-phospho-beta-D-ribosyl)acetamidine + L-glutamate + ADP + phosphate + H(+). It participates in purine metabolism; IMP biosynthesis via de novo pathway; 5-amino-1-(5-phospho-D-ribosyl)imidazole from N(2)-formyl-N(1)-(5-phospho-D-ribosyl)glycinamide: step 1/2. Part of the phosphoribosylformylglycinamidine synthase complex involved in the purines biosynthetic pathway. Catalyzes the ATP-dependent conversion of formylglycinamide ribonucleotide (FGAR) and glutamine to yield formylglycinamidine ribonucleotide (FGAM) and glutamate. The FGAM synthase complex is composed of three subunits. PurQ produces an ammonia molecule by converting glutamine to glutamate. PurL transfers the ammonia molecule to FGAR to form FGAM in an ATP-dependent manner. PurS interacts with PurQ and PurL and is thought to assist in the transfer of the ammonia molecule from PurQ to PurL. This chain is Phosphoribosylformylglycinamidine synthase subunit PurL, found in Lactobacillus delbrueckii subsp. bulgaricus (strain ATCC 11842 / DSM 20081 / BCRC 10696 / JCM 1002 / NBRC 13953 / NCIMB 11778 / NCTC 12712 / WDCM 00102 / Lb 14).